Here is a 264-residue protein sequence, read N- to C-terminus: Small ribosomal subunit protein eS1 (264 aa).

Residues 232 to 264 are disordered; sequence HGEGGGSGKPSGDETGAKVERADGYEPPVQESV. Residues 242 to 255 are compositionally biased toward basic and acidic residues; that stretch reads SGDETGAKVERADG.

The protein belongs to the eukaryotic ribosomal protein eS1 family. Component of the small ribosomal subunit. Mature ribosomes consist of a small (40S) and a large (60S) subunit. The 40S subunit contains about 33 different proteins and 1 molecule of RNA (18S). The 60S subunit contains about 49 different proteins and 3 molecules of RNA (28S, 5.8S and 5S). Part of the small subunit (SSU) processome, composed of more than 70 proteins and the RNA chaperone small nucleolar RNA (snoRNA) U3.

It is found in the cytoplasm. The protein localises to the nucleus. Its subcellular location is the nucleolus. Component of the small ribosomal subunit. The ribosome is a large ribonucleoprotein complex responsible for the synthesis of proteins in the cell. Part of the small subunit (SSU) processome, first precursor of the small eukaryotic ribosomal subunit. During the assembly of the SSU processome in the nucleolus, many ribosome biogenesis factors, an RNA chaperone and ribosomal proteins associate with the nascent pre-rRNA and work in concert to generate RNA folding, modifications, rearrangements and cleavage as well as targeted degradation of pre-ribosomal RNA by the RNA exosome. May play a role during erythropoiesis. This is Small ribosomal subunit protein eS1 from Ophiophagus hannah (King cobra).